A 1344-amino-acid chain; its full sequence is DEAD-box ATP-dependent RNA helicase FANCM (1344 aa).

The disordered stretch occupies residues 39–61 (SSSHFTPLANPPITANLTKPPAK). In terms of domain architecture, Helicase ATP-binding spans 124 to 292 (ITKTALFSNT…GIIDNLQIST (169 aa)). An ATP-binding site is contributed by 137 to 144 (LPTGLGKT). Positions 240–243 (DEAH) match the DEAH box motif. One can recognise a Helicase C-terminal domain in the interval 450–621 (KLSKMLEILV…SFNFHPSPRM (172 aa)). Disordered stretches follow at residues 765–790 (VNTS…KDYE), 1110–1148 (EVSS…TQAE), 1183–1218 (YSAG…SNQD), and 1307–1344 (KQRS…LGLW). Residues 1118-1135 (SADENEDVTGDSFEDSFI) are compositionally biased toward acidic residues. Residues 1207 to 1218 (TPKTTNSESNQD) are compositionally biased toward polar residues. Basic and acidic residues predominate over residues 1308–1318 (QRSEAKEKEDA).

This sequence belongs to the DEAD box helicase family. DEAH subfamily. FANCM sub-subfamily.

The protein resides in the nucleus. The enzyme catalyses ATP + H2O = ADP + phosphate + H(+). Involved in ordered homologous recombination (HR) events in somatic and meiotic cells. Involved in the suppression of spontaneous HR events in somatic cells. Has an opposite function to the DNA binding cofactor MHF1 which promotes spontaneous HR. Functions in replicative repair independently of MHF1 and in a parallel pathway to the endonuclease MUS81. Acts in the same pathway as the two DNA-binding cofactors MHF1 and MHF2 to restrain class II meiotic crossover (CO), and acts exclusively with MHF1 and MHF2 during meiosis to repair DNA interstrand cross-links (ICLs). This common pathway is in parallel to the pathway that involves the RECQ4A helicase. Seems to be involved in the stabilization of recombination intermediates. Involved in DNA double-strand break (DSB) repair during meiosis. Required for synthesis-dependent strand annealing (SDSA) and to a lesser extent for single-strand annealing (SSA). May process meiotic DSB repair intermediates, possibly D-loops, driving them toward noncrossover (NCO) resolution. This Arabidopsis thaliana (Mouse-ear cress) protein is DEAD-box ATP-dependent RNA helicase FANCM.